Here is a 95-residue protein sequence, read N- to C-terminus: Defensin (95 aa).

Positions 1–17 are cleaved as a signal peptide; it reads MKNYVFALLVVTAVAIA. A propeptide spanning residues 18-55 is cleaved from the precursor; it reads LPNEDKNAPMRVHLLPQKEDESLKLEVTPVKEHHRTRR. 3 cysteine pairs are disulfide-bonded: C58–C85, C71–C91, and C75–C93.

The protein belongs to the invertebrate defensin family. Type 1 subfamily.

The protein resides in the secreted. Functionally, antibacterial peptide mostly active against Gram-positive bacteria. This is Defensin from Formica aquilonia (Red wood ant).